We begin with the raw amino-acid sequence, 399 residues long: L-asparaginase-like protein GE13669 (399 aa).

The first 22 residues, 1–22 (MLAQSCCLRLLILLLLFKSTCS), serve as a signal peptide directing secretion. 3 cysteine pairs are disulfide-bonded: Cys90/Cys95, Cys189/Cys205, and Cys344/Cys371.

Belongs to the Ntn-hydrolase family.

This is L-asparaginase-like protein GE13669 from Drosophila yakuba (Fruit fly).